The chain runs to 505 residues: Beta-agarase (505 aa).

The signal sequence occupies residues 1-23 (MLKVIPWLLVTSSLVAIPTYIHA). Glu-200 serves as the catalytic Proton donor. The active-site Nucleophile is Glu-322.

It belongs to the glycosyl hydrolase 86 family.

The protein resides in the secreted. The catalysed reaction is Hydrolysis of (1-&gt;4)-beta-D-galactosidic linkages in agarose, giving the tetramer as the predominant product.. Its function is as follows. Hydrolase that cleaves agar at the (1-&gt;4) linkage, producing tetrameric saccharide molecules. Is specific for agar and agarose and does not digest alginate or carrageenan. The chain is Beta-agarase from Pseudoalteromonas atlantica (Alteromonas atlantica).